Consider the following 156-residue polypeptide: Small ribosomal subunit protein uS7 (156 aa).

Belongs to the universal ribosomal protein uS7 family. Part of the 30S ribosomal subunit. Contacts proteins S9 and S11.

One of the primary rRNA binding proteins, it binds directly to 16S rRNA where it nucleates assembly of the head domain of the 30S subunit. Is located at the subunit interface close to the decoding center, probably blocks exit of the E-site tRNA. This is Small ribosomal subunit protein uS7 from Bacillus cereus (strain ZK / E33L).